The following is a 239-amino-acid chain: Purine nucleoside phosphorylase DeoD-type (239 aa).

His-5 lines the a purine D-ribonucleoside pocket. Residues Gly-21, Arg-25, Arg-44, and 88 to 91 (RVGS) each bind phosphate. Residues 180–182 (EME) and 204–205 (SD) each bind a purine D-ribonucleoside. Asp-205 functions as the Proton donor in the catalytic mechanism.

It belongs to the PNP/UDP phosphorylase family. In terms of assembly, homohexamer; trimer of homodimers.

The enzyme catalyses a purine D-ribonucleoside + phosphate = a purine nucleobase + alpha-D-ribose 1-phosphate. The catalysed reaction is a purine 2'-deoxy-D-ribonucleoside + phosphate = a purine nucleobase + 2-deoxy-alpha-D-ribose 1-phosphate. Catalyzes the reversible phosphorolytic breakdown of the N-glycosidic bond in the beta-(deoxy)ribonucleoside molecules, with the formation of the corresponding free purine bases and pentose-1-phosphate. This is Purine nucleoside phosphorylase DeoD-type from Salmonella gallinarum (strain 287/91 / NCTC 13346).